Consider the following 1862-residue polypeptide: MGFCKADAATSFLRAARSGNLDKALDHLRNGVDINTCNQNGLNGLHLASKEGHVKMVVELLHKEIILETTTKKGNTALHIAALAGQDEVVRELVNYGANVNAQSQKGFTPLYMAAQENHLEVVKFLLENGANQNVATEDGFTPLAVALQQGHENVVAHLINYGTKGKVRLPALHIAARNDDTRTAAVLLQNDPNPDVLSKTGFTPLHIAAHYENLNVAQLLLNRGASVNFTPQNGITPLHIASRRGNVIMVRLLLDRGAQIETRTKDELTPLHCAARNGHVRISEILLDHGAPIQAKTKNGLSPIHMAAQGDHLDCVRLLLQYNAEIDDITLDHLTPLHVAAHCGHHRVAKVLLDKGAKPNSRALNGFTPLHIACKKNHIRVMELLLKTGASIDAVTESGLTPLHVASFMGHLPIVKNLLQRGASPNVSNVKVETPLHMAARAGHTEVAKYLLQNKAKANAKAKDDQTPLHCAARIGHTGMVKLLLENGASPNLATTAGHTPLHTAAREGHVDTALALLEKEASQACMTKKGFTPLHVAAKYGKVRLAELLLEHDAHPNAAGKNGLTPLHVAVHHNNLDIVKLLLPRGGSPHSPAWNGYTPLHIAAKQNQIEVARSLLQYGGSANAESVQGVTPLHLAAQEGHTEMVALLLSKQANGNLGNKSGLTPLHLVSQEGHVPVADVLIKHGVTVDATTRMGYTPLHVASHYGNIKLVKFLLQHQADVNAKTKLGYSPLHQAAQQGHTDIVTLLLKNGASPNEVSSNGTTPLAIAKRLGYISVTDVLKVVTDETSVVLVSDKHRMSYPETVDEILDVSEDEGDELVGSKAERRDSRDVGEEKELLDFVPKLDQVVESPAIPRIPCVTPETVVIRSEDQEQASKEYDEDSLIPSSPATETSDNISPVASPVHTGFLVSFMVDARGGSMRGSRHNGLRVVIPPRTCAAPTRITCRLVKPQKLNTPPPLAEEEGLASRIIALGPTGAQFLSPVIVEIPHFASHGRGDRELVVLRSENGSVWKEHKSRYGESYLDQILNGMDEELGSLEELEKKRVCRIITTDFPLYFVIMSRLCQDYDTIGPEGGSLRSKLVPLVQATFPENAVTKKVKLALQAQPVPDELVTKLLGNQATFSPIVTVEPRRRKFHRPIGLRIPLPPSWTDNPRDSGEGDTTSLRLLCSVIGGTDQAQWEDITGTTKLIYANECANFTTNVSARFWLSDCPRTAEAVHFATLLYKELTAVPYMAKFVIFAKMNDAREGRLRCYCMTDDKVDKTLEQHENFVEVARSRDIEVLEGMPLFAELSGNLVPVKKAAQQRSFHFQSFRENRLAIPVKVRDSSREPGGFLSFLRKTMKYEDTQHILCHLNITMPPCTKGSGAEDRRRTLTPLTLRYSILSESRLGFTSDTDRVEMRMAVIREHLGLSWAELARELQFSVEDINRIRVENPNSLLDQSTALLTLWVDREGENAKMENLYTALRNIDRSEIVNMLEGSGRQSRNLKPERRHGDREYSLSPSQVNGYSSLQDELLSPASLQYALPSPLCADQYWNEVTVIDAIPLAATEHDTMLEMSDMQVWSAGLTPSLVTAEDSSLECSKAEDSDAIPEWKLEGAHSEDTQGPELGSQDLVEDDTVDSDATNGLADLLGQEEGQRSEKKRQEVSGTEQDTETEVSLVSGQQRVHARITDSPSVRQVLDRSQARTLDWDKQGSTAVHPQEATQSSWQEEVTQGPHSFQRRITTIQGPEPGALQEYEQVLVSTREHVQRGPPETGSPKAGKEPSLWAPESAFSQEVQGDELQNIPGEQVTEEQFTDEQGNIVTKKIIRKVVRQVDSSGAIDTQQHEEVELRGSGLQPDLIEGRKGAQIVKRASLKRGKQ.

Residues 1–827 are 89 kDa domain; it reads MGFCKADAAT…DELVGSKAER (827 aa). ANK repeat units follow at residues 40 to 69, 73 to 102, 106 to 135, 139 to 168, 170 to 197, 201 to 230, 234 to 263, 267 to 296, 300 to 329, 333 to 362, 366 to 395, 399 to 428, 432 to 461, 465 to 494, 498 to 527, 531 to 560, 564 to 593, 597 to 626, 630 to 659, 663 to 692, 696 to 725, 729 to 758, and 762 to 791; these read NGLNGLHLASKEGHVKMVVELLHKEIILET, KGNTALHIAALAGQDEVVRELVNYGANVNA, KGFTPLYMAAQENHLEVVKFLLENGANQNV, DGFTPLAVALQQGHENVVAHLINYGTKGKV, LPALHIAARNDDTRTAAVLLQNDPNPDV, TGFTPLHIAAHYENLNVAQLLLNRGASVNF, NGITPLHIASRRGNVIMVRLLLDRGAQIET, DELTPLHCAARNGHVRISEILLDHGAPIQA, NGLSPIHMAAQGDHLDCVRLLLQYNAEIDD, DHLTPLHVAAHCGHHRVAKVLLDKGAKPNS, NGFTPLHIACKKNHIRVMELLLKTGASIDA, SGLTPLHVASFMGHLPIVKNLLQRGASPNV, KVETPLHMAARAGHTEVAKYLLQNKAKANA, DDQTPLHCAARIGHTGMVKLLLENGASPNL, AGHTPLHTAAREGHVDTALALLEKEASQAC, KGFTPLHVAAKYGKVRLAELLLEHDAHPNA, NGLTPLHVAVHHNNLDIVKLLLPRGGSPHS, NGYTPLHIAAKQNQIEVARSLLQYGGSANA, QGVTPLHLAAQEGHTEMVALLLSKQANGNL, SGLTPLHLVSQEGHVPVADVLIKHGVTVDA, MGYTPLHVASHYGNIKLVKFLLQHQADVNA, LGYSPLHQAAQQGHTDIVTLLLKNGASPNE, and NGTTPLAIAKRLGYISVTDVLKVVTDETSV. Phosphoserine is present on Lys-55. (3S)-3-hydroxyasparagine; by HIF1AN; partial is present on Asn-101. Position 229 is a (3S)-3-hydroxyasparagine; by HIF1AN (Asn-229). Ser-425 is subject to Phosphoserine. A (3S)-3-hydroxyasparagine; by HIF1AN mark is found at Asn-427 and Asn-460. (3S)-3-hydroxyasparagine; by HIF1AN is present on residues Asn-625 and Asn-658. At Asp-691 the chain carries (3S)-3-hydroxyaspartate; by HIF1AN. Asn-724 carries the (3S)-3-hydroxyasparagine; by HIF1AN modification. A Phosphoserine modification is found at Ser-755. At Asn-757 the chain carries (3S)-3-hydroxyasparagine; by HIF1AN. Residues Ser-777, Ser-813, Ser-830, and Ser-852 each carry the phosphoserine modification. The interval 812–834 is disordered; that stretch reads VSEDEGDELVGSKAERRDSRDVG. Residues 824–834 show a composition bias toward basic and acidic residues; sequence KAERRDSRDVG. Thr-862 is subject to Phosphothreonine. Residues 872-900 form a disordered region; that stretch reads DQEQASKEYDEDSLIPSSPATETSDNISP. The span at 886 to 900 shows a compositional bias: polar residues; it reads IPSSPATETSDNISP. ZU5 domains lie at 909–1064 and 1066–1212; these read FLVS…IMSR and CQDY…LSDC. Residue Thr-957 is modified to Phosphothreonine. Tyr-1069 bears the Phosphotyrosine mark. Ser-1078 is modified (phosphoserine). A UPA domain region spans residues 1197 to 1331; sequence ANFTTNVSAR…PVKVRDSSRE (135 aa). 2 positions are modified to phosphothreonine: Thr-1374 and Thr-1376. Ser-1386 and Ser-1388 each carry phosphoserine. The interval 1387–1862 is 55 kDa regulatory domain; it reads ESRLGFTSDT…KRASLKRGKQ (476 aa). Residue Thr-1396 is modified to Phosphothreonine. The region spanning 1399 to 1483 is the Death domain; the sequence is VEMRMAVIRE…EIVNMLEGSG (85 aa). Ser-1424, Ser-1473, and Ser-1482 each carry phosphoserine. The tract at residues 1481-1506 is disordered; sequence GSGRQSRNLKPERRHGDREYSLSPSQ. Basic and acidic residues predominate over residues 1489-1500; it reads LKPERRHGDREY. Ser-1519, Ser-1529, and Ser-1612 each carry phosphoserine. Disordered regions lie at residues 1598–1720 and 1744–1767; these read EGAH…GPHS and VSTREHVQRGPPETGSPKAGKEPS. Basic and acidic residues predominate over residues 1637-1647; sequence EGQRSEKKRQE. The segment covering 1648-1666 has biased composition (polar residues); it reads VSGTEQDTETEVSLVSGQQ. Ser-1660, Ser-1675, and Ser-1685 each carry phosphoserine. Residues 1681–1694 are compositionally biased toward basic and acidic residues; the sequence is VLDRSQARTLDWDK. Residues 1695–1720 are compositionally biased toward polar residues; the sequence is QGSTAVHPQEATQSSWQEEVTQGPHS.

In terms of assembly, component of the ankyrin-1 complex in the erythrocyte, composed of ANK1, RHCE, RHAG, SLC4A1, EPB42, GYPA, GYPB and AQP1. Interacts with a number of integral membrane proteins and cytoskeletal proteins. Interacts (via N-terminus) with SPTB/spectrin (beta chain). Also interacts with TTN/titin. Isoform Mu17 interacts with OBSCN isoform 3/obscurin. Interacts with HIF1AN. Interacts (via ANK 1-5 repeats) with RHCE; this interaction mediates the primary membrane attachment site for ANK1. Interacts (via ANK 1-2 repeats) with AQP1 (via the N-terminal). Interacts (via ANK 1-13 repeats) with EPB42. Interacts directly with SLC4A1 (via the cytoplasmic domain); this interaction is mediated by the SLC4A1 Band 3-II and Band 3-III dimers. In terms of processing, regulated by phosphorylation. Acylated by palmitic acid group(s). Post-translationally, hydroxylated by HIF1AN at several asparagine and 1 aspartate residue within ANK repeat region; hydroxylation seems to increase the conformational stability of this region and may also modulate protein-protein interactions mediated by the ANK repeat region.

Its subcellular location is the cytoplasm. The protein resides in the cytoskeleton. The protein localises to the membrane. It is found in the sarcoplasmic reticulum. Component of the ankyrin-1 complex, a multiprotein complex involved in the stability and shape of the erythrocyte membrane. Attaches integral membrane proteins to cytoskeletal elements; binds to the erythrocyte membrane protein band 4.2, to Na-K ATPase, to the lymphocyte membrane protein GP85, and to the cytoskeletal proteins fodrin, tubulin, vimentin and desmin. Erythrocyte ankyrins also link spectrin (beta chain) to the cytoplasmic domain of the erythrocytes anion exchange protein; they retain most or all of these binding functions. The sequence is that of Ankyrin-1 from Mus musculus (Mouse).